The chain runs to 142 residues: Large ribosomal subunit protein uL11 (142 aa).

Belongs to the universal ribosomal protein uL11 family. As to quaternary structure, part of the ribosomal stalk of the 50S ribosomal subunit. Interacts with L10 and the large rRNA to form the base of the stalk. L10 forms an elongated spine to which L12 dimers bind in a sequential fashion forming a multimeric L10(L12)X complex. In terms of processing, one or more lysine residues are methylated.

Functionally, forms part of the ribosomal stalk which helps the ribosome interact with GTP-bound translation factors. This Acinetobacter baylyi (strain ATCC 33305 / BD413 / ADP1) protein is Large ribosomal subunit protein uL11.